Reading from the N-terminus, the 201-residue chain is Recombination protein RecR (201 aa).

The segment at 59 to 74 (CEICGNMDTENICRIC) adopts a C4-type zinc-finger fold. Residues 82–177 (SIIAIVETVA…KISRLASGIP (96 aa)) enclose the Toprim domain.

It belongs to the RecR family.

In terms of biological role, may play a role in DNA repair. It seems to be involved in an RecBC-independent recombinational process of DNA repair. It may act with RecF and RecO. This chain is Recombination protein RecR, found in Rickettsia rickettsii (strain Iowa).